Reading from the N-terminus, the 300-residue chain is Nucleotide-binding protein Dshi_0209 (300 aa).

20-27 contacts ATP; sequence GPSGAGRT. A GTP-binding site is contributed by 67–70; the sequence is DART.

This sequence belongs to the RapZ-like family.

Functionally, displays ATPase and GTPase activities. The chain is Nucleotide-binding protein Dshi_0209 from Dinoroseobacter shibae (strain DSM 16493 / NCIMB 14021 / DFL 12).